Reading from the N-terminus, the 397-residue chain is MAKKTIKDVDLKDKKVLVRVDFNVPLKDGVITNDNRIVAALPTIKYVIENGGKAILFSHLGRVKTEEDKAGKSLKPVAERLSELLGQPVTFVPETRGKELEDAVNNMKDGDVLVFENTRFEDVDGKKESGNDAELGKYWASLGDVFVNDAFGTAHRAHASNVGIASTGIPTVAGFLMEKEIKFIGEAVENPKRPFVAILGGAKVSDKIAVIENLIEKADKILIGGGMAYTFMKAQGYSVGLSLLEEDKVDLAKSLMEKAGDKLVLPVDTVVSKEFSNDAPFHTVPSTEIPDDEEGLDIGEKTIELFANELQGAKTVVWNGPMGVFEMSNFAKGTIGVCEAIANLEDATTIIGGGDSAAAAIQLGYENKFSHISTGGGASLELLEGKTLPGLASINDK.

Residues 21 to 23, Arg36, 59 to 62, Arg119, and Arg156 contribute to the substrate site; these read DFN and HLGR. Residues Lys207, Gly295, Glu326, and 353-356 each bind ATP; that span reads GGDS.

Belongs to the phosphoglycerate kinase family. Monomer.

The protein localises to the cytoplasm. It catalyses the reaction (2R)-3-phosphoglycerate + ATP = (2R)-3-phospho-glyceroyl phosphate + ADP. It functions in the pathway carbohydrate degradation; glycolysis; pyruvate from D-glyceraldehyde 3-phosphate: step 2/5. The sequence is that of Phosphoglycerate kinase from Enterococcus faecalis (strain ATCC 700802 / V583).